We begin with the raw amino-acid sequence, 179 residues long: Hypoxanthine-guanine phosphoribosyltransferase (179 aa).

Diphosphate-binding residues include Lys-42 and Gly-43. Mg(2+)-binding residues include Glu-98 and Asp-99. Glu-102 (proton acceptor) is an active-site residue. GMP-binding positions include Lys-130, 151-152, and Asp-158; that span reads FV. Diphosphate is bound at residue Arg-164.

It belongs to the purine/pyrimidine phosphoribosyltransferase family. Mg(2+) is required as a cofactor.

It is found in the cytoplasm. The catalysed reaction is IMP + diphosphate = hypoxanthine + 5-phospho-alpha-D-ribose 1-diphosphate. It catalyses the reaction GMP + diphosphate = guanine + 5-phospho-alpha-D-ribose 1-diphosphate. Its pathway is purine metabolism; IMP biosynthesis via salvage pathway; IMP from hypoxanthine: step 1/1. The protein operates within purine metabolism; GMP biosynthesis via salvage pathway; GMP from guanine: step 1/1. Its function is as follows. Purine salvage pathway enzyme that catalyzes the transfer of the ribosyl-5-phosphate group from 5-phospho-alpha-D-ribose 1-diphosphate (PRPP) to the N9 position of the 6-oxopurines hypoxanthine and guanine to form the corresponding ribonucleotides IMP (inosine 5'-monophosphate) and GMP (guanosine 5'-monophosphate), with the release of PPi. In Staphylococcus epidermidis (strain ATCC 35984 / DSM 28319 / BCRC 17069 / CCUG 31568 / BM 3577 / RP62A), this protein is Hypoxanthine-guanine phosphoribosyltransferase (hpt).